Reading from the N-terminus, the 263-residue chain is Glutamate racemase (263 aa).

Substrate-binding positions include 13-14 and 45-46; these read DS and YG. Cys77 (proton donor/acceptor) is an active-site residue. 78 to 79 provides a ligand contact to substrate; it reads NT. Cys185 (proton donor/acceptor) is an active-site residue. 186-187 contributes to the substrate binding site; the sequence is TH.

Belongs to the aspartate/glutamate racemases family.

The enzyme catalyses L-glutamate = D-glutamate. It participates in cell wall biogenesis; peptidoglycan biosynthesis. Its function is as follows. Provides the (R)-glutamate required for cell wall biosynthesis. This Vibrio vulnificus (strain YJ016) protein is Glutamate racemase.